We begin with the raw amino-acid sequence, 364 residues long: Methylthioribose-1-phosphate isomerase (364 aa).

Residues 49–51 (RGA), R89, and Q201 each bind substrate. D242 serves as the catalytic Proton donor. Residue 252 to 253 (NK) coordinates substrate.

The protein belongs to the eIF-2B alpha/beta/delta subunits family. MtnA subfamily.

The enzyme catalyses 5-(methylsulfanyl)-alpha-D-ribose 1-phosphate = 5-(methylsulfanyl)-D-ribulose 1-phosphate. It participates in amino-acid biosynthesis; L-methionine biosynthesis via salvage pathway; L-methionine from S-methyl-5-thio-alpha-D-ribose 1-phosphate: step 1/6. Functionally, catalyzes the interconversion of methylthioribose-1-phosphate (MTR-1-P) into methylthioribulose-1-phosphate (MTRu-1-P). This Leptospira interrogans serogroup Icterohaemorrhagiae serovar copenhageni (strain Fiocruz L1-130) protein is Methylthioribose-1-phosphate isomerase.